The following is a 105-amino-acid chain: MPKKVLTGVVVSDKMQKTVTVLVERQFPHPLYGKVIKRSKKYLAHDPEEKYKLGDVVEIIESRPISKRKRFRVLRLVESGRMDLVEKYLIRRQNYESLSKRGGKA.

This sequence belongs to the universal ribosomal protein uS17 family. In terms of assembly, part of the 30S ribosomal subunit. Contacts protein S12.

Its function is as follows. One of the primary rRNA binding proteins, it binds directly to 16S rRNA where it helps nucleate assembly of the platform and body of the 30S subunit by bringing together and stabilizing interactions between several different RNA helices. The combined cluster of proteins S8, S12 and S17 appears to hold together the shoulder and platform of the 30S subunit. This is Small ribosomal subunit protein uS17 from Thermus thermophilus (strain ATCC 27634 / DSM 579 / HB8).